The sequence spans 440 residues: G-protein coupled receptor family C group 5 member C (440 aa).

A signal peptide spans 1–22 (MATHRTLLMCLGLPLFFPGALA). Over 23–49 (QNHAPPGCSPDLDPLYYNLCDRSGAWG) the chain is Extracellular. A helical membrane pass occupies residues 50-70 (IVSEAVAGAGIITTFVLTIIL). The Cytoplasmic portion of the chain corresponds to 71-84 (VASLPFVQDTKKRS). A helical membrane pass occupies residues 85–105 (LLGTQVFFLLGTLGLFCLVFA). Residues 106–119 (CVVKPDFSTCASRR) are Extracellular-facing. Residues 120–140 (FLFGVLFAICFSCLVAHVLSL) form a helical membrane-spanning segment. At 141–155 (NFLTRKNHGPRGWVI) the chain is on the cytoplasmic side. The chain crosses the membrane as a helical span at residues 156 to 176 (FTVALLLTLVEVIINTEWLII). The Extracellular segment spans residues 177–207 (TLVRGGGQVSPLGNVSADSTMTSPCAIANMD). A glycan (N-linked (GlcNAc...) asparagine) is linked at asparagine 190. Residues 208–228 (FVMALIYVMLLLLTAFLGAWP) traverse the membrane as a helical segment. Over 229-240 (TLCGRFKRWRKH) the chain is Cytoplasmic. Residues 241-261 (GVFVLLTTVISIAIWVVWIVM) traverse the membrane as a helical segment. Topologically, residues 262 to 278 (YTYGNEQHHSPTWDDPT) are extracellular. Residues 279–299 (LAIALAANAWTFVLFYVIPEV) traverse the membrane as a helical segment. At 300–440 (SQVTKPSPEQ…QVFRNPYVWD (141 aa)) the chain is on the cytoplasmic side. 4 positions are modified to phosphoserine: serine 343, serine 382, serine 402, and serine 405. Tyrosine 413 is subject to Phosphotyrosine. Threonine 422 is subject to Phosphothreonine.

It belongs to the G-protein coupled receptor 3 family.

The protein localises to the cell membrane. Functionally, this retinoic acid-inducible G-protein coupled receptor provide evidence for a possible interaction between retinoid and G-protein signaling pathways. The chain is G-protein coupled receptor family C group 5 member C (Gprc5c) from Mus musculus (Mouse).